Consider the following 310-residue polypeptide: Glutaminase 1 (310 aa).

Positions 66, 117, 161, 168, 192, 244, and 262 each coordinate substrate. Lys294 carries the N6-acetyllysine modification.

The protein belongs to the glutaminase family. As to quaternary structure, homotetramer.

It catalyses the reaction L-glutamine + H2O = L-glutamate + NH4(+). The sequence is that of Glutaminase 1 from Shigella flexneri.